Consider the following 557-residue polypeptide: Aspartate--tRNA ligase, cytoplasmic (557 aa).

A compositionally biased stretch (basic and acidic residues) spans 1–12; it reads MSQDENIVKAVE. The interval 1–74 is disordered; it reads MSQDENIVKA…AAAEDTAKDN (74 aa). S2 carries the post-translational modification N-acetylserine. Residue S14 is modified to Phosphoserine. Residues 37-74 show a composition bias toward basic and acidic residues; it reads LQKEQEKQRKKEERALQLEAEREAREKKAAAEDTAKDN. An L-aspartate-binding site is contributed by E281. S301 carries the phosphoserine modification. Positions 303–306 are aspartate; that stretch reads QFNK. R325 contributes to the L-aspartate binding site. Residues 325 to 327, 333 to 335, and E478 contribute to the ATP site; these read RAE and RHM. 2 residues coordinate L-aspartate: S481 and R485. Phosphoserine is present on S502. 528–531 provides a ligand contact to ATP; it reads GLER. S546 carries the post-translational modification Phosphoserine.

Belongs to the class-II aminoacyl-tRNA synthetase family. Type 2 subfamily. In terms of assembly, homodimer.

It localises to the cytoplasm. It catalyses the reaction tRNA(Asp) + L-aspartate + ATP = L-aspartyl-tRNA(Asp) + AMP + diphosphate. In Saccharomyces cerevisiae (strain ATCC 204508 / S288c) (Baker's yeast), this protein is Aspartate--tRNA ligase, cytoplasmic (DPS1).